A 485-amino-acid polypeptide reads, in one-letter code: 2-succinylbenzoate--CoA ligase (485 aa).

Belongs to the ATP-dependent AMP-binding enzyme family. MenE subfamily.

The catalysed reaction is 2-succinylbenzoate + ATP + CoA = 2-succinylbenzoyl-CoA + AMP + diphosphate. It participates in quinol/quinone metabolism; 1,4-dihydroxy-2-naphthoate biosynthesis; 1,4-dihydroxy-2-naphthoate from chorismate: step 5/7. It functions in the pathway quinol/quinone metabolism; menaquinone biosynthesis. Converts 2-succinylbenzoate (OSB) to 2-succinylbenzoyl-CoA (OSB-CoA). This Enterococcus faecalis (strain ATCC 700802 / V583) protein is 2-succinylbenzoate--CoA ligase.